We begin with the raw amino-acid sequence, 206 residues long: Ras-related protein RABG3a (206 aa).

Residue 15-22 coordinates GTP; sequence GDSGVGKT. The Effector region motif lies at 37 to 45; that stretch reads YKATIGADF. Residues 63–67, 125–128, and 158–159 each bind GTP; these read DTAGQ, NKID, and SA. Residues Cys204 and Cys206 are each lipidated (S-geranylgeranyl cysteine). Position 206 is a cysteine methyl ester (Cys206).

It belongs to the small GTPase superfamily. Rab family.

Its subcellular location is the cell membrane. Its function is as follows. Intracellular vesicle trafficking and protein transport. In Arabidopsis thaliana (Mouse-ear cress), this protein is Ras-related protein RABG3a (RABG3A).